Here is a 256-residue protein sequence, read N- to C-terminus: MALSCSKVLTFSLSSVVGGDDAKKKLSLCSSSSLSASVNGGGSRNMRVCAAASNAPAPLTGVIFEPFQELKKDYLAVPIAPNVSLSRQNYSDEAEAAINEQINVEYNVSYVYHSLFAYFDRDNIALKGLAKFFKESSEEEREHAEKLIKYQNIRGGRVVLHPITSPPSEFEHPEKGDALYAMELALSLEKLTNEKLLYVHSVADRNNDAQLADFIESEFLNEQVESIKKIAEYVTQLRLVGKGHGVWHFDQRLLHD.

A chloroplast-targeting transit peptide spans 1-54; it reads MALSCSKVLTFSLSSVVGGDDAKKKLSLCSSSSLSASVNGGGSRNMRVCAAASN. An extension peptide (EP) region spans residues 55-87; the sequence is APAPLTGVIFEPFQELKKDYLAVPIAPNVSLSR. Residues 88–241 enclose the Ferritin-like diiron domain; the sequence is QNYSDEAEAA…EYVTQLRLVG (154 aa). The Fe cation site is built by Glu-105, Glu-140, His-143, Glu-189, and Gln-223.

It belongs to the ferritin family. In terms of assembly, oligomer of 24 subunits. There are two types of subunits: L (light) chain and H (heavy) chain. The major chain can be light or heavy, depending on the species and tissue type. The functional molecule forms a roughly spherical shell with a diameter of 12 nm and contains a central cavity into which the insoluble mineral iron core is deposited.

It is found in the plastid. The protein resides in the chloroplast. The catalysed reaction is 4 Fe(2+) + O2 + 4 H(+) = 4 Fe(3+) + 2 H2O. Stores iron in a soluble, non-toxic, readily available form. Important for iron homeostasis. Has ferroxidase activity. Iron is taken up in the ferrous form and deposited as ferric hydroxides after oxidation. The protein is Ferritin-3, chloroplastic of Vigna unguiculata (Cowpea).